The primary structure comprises 105 residues: Large ribosomal subunit protein uL24 (105 aa).

This sequence belongs to the universal ribosomal protein uL24 family. Part of the 50S ribosomal subunit.

In terms of biological role, one of two assembly initiator proteins, it binds directly to the 5'-end of the 23S rRNA, where it nucleates assembly of the 50S subunit. Its function is as follows. One of the proteins that surrounds the polypeptide exit tunnel on the outside of the subunit. The sequence is that of Large ribosomal subunit protein uL24 from Xanthomonas oryzae pv. oryzae (strain MAFF 311018).